Reading from the N-terminus, the 64-residue chain is MECVCVDSSWPQWLRNLILGILISSILFILTKTQDTVAVYHEPSVYSIDQTQKFQKIDIHNGGK.

The Cytoplasmic portion of the chain corresponds to methionine 1–glutamine 12. The chain crosses the membrane as a helical; Signal-anchor for type II membrane protein span at residues tryptophan 13–leucine 30. The Lumenal segment spans residues threonine 31–lysine 64.

Belongs to the gammacarmovirus double gene block protein 2 family.

The protein resides in the host endoplasmic reticulum membrane. Required for cell-to-cell movement of virions in the host plant together with p7a. This Maize chlorotic mottle virus (isolate United States/Kansas/1987) (MCMV) protein is p7b.